Reading from the N-terminus, the 580-residue chain is Mucolipin-1 (580 aa).

The tract at residues 1–38 (MATPAGRRASETERLLTPNPGYGTQVGTSPAPTTPTEE) is disordered. Topologically, residues 1–65 (MATPAGRRAS…FRAKGRKPCK (65 aa)) are cytoplasmic. Phosphoserine is present on S10. The Dileucine motif; mediates targeting to lysosomes motif lies at 11–16 (ETERLL). The segment at 42–62 (RRRLKYFFMSPCDKFRAKGRK) is interaction with phosphoinositides. Residues 66 to 86 (LMLQVVKILVVTVQLILFGLS) traverse the membrane as a helical segment. The Extracellular segment spans residues 87–298 (NQLVVTFREE…VSRHGDNSFR (212 aa)). The segment at 107-121 (LGYSDGSDDTFAAYT) is extracellular/lumenal pore loop. C166 and C192 are oxidised to a cystine. N-linked (GlcNAc...) asparagine glycans are attached at residues N220 and N230. C253 and C284 are disulfide-bonded. The chain crosses the membrane as a helical span at residues 299-321 (LLFDVVVILTCSLSFLLCARSLL). The Cytoplasmic portion of the chain corresponds to 322 to 350 (RGFLLQNEFVVFMWRRRGREISLWERLEF). Residues 351 to 371 (VNGWYILLVTSDVLTISGTVM) traverse the membrane as a helical segment. Topologically, residues 372–382 (KIGIEAKNLAS) are extracellular. A helical membrane pass occupies residues 383-405 (YDVCSILLGTSTLLVWVGVIRYL). Over 406 to 427 (TFFHKYNILIATLRVALPSVMR) the chain is Cytoplasmic. A helical membrane pass occupies residues 428–448 (FCCCVAVIYLGYCFCGWIVLG). Residues 449-456 (PYHVKFRS) are Extracellular-facing. The pore-forming intramembrane region spans 457-477 (LSMVSECLFSLINGDDMFVTF). The Selectivity filter motif lies at 469 to 474 (NGDDMF). At 478-491 (AAMQAQQGHSSLVW) the chain is on the extracellular side. The chain crosses the membrane as a helical span at residues 492 to 513 (LFSQLYLYSFISLFIYMVLSLF). At 514–580 (IALITGAYDT…SPEDHSLLVN (67 aa)) the chain is on the cytoplasmic side. S557 is modified (phosphoserine). A Phosphoserine; by PAK modification is found at S559. Residues 565–567 (CCC) form a required for palmitoylation and association with membranes region. Positions 573-578 (EDHSLL) match the Dileucine internalization motif; mediates AP2 complex-dependent internalization motif.

This sequence belongs to the transient receptor (TC 1.A.4) family. Polycystin subfamily. MCOLN1 sub-subfamily. As to quaternary structure, homotetramer. Homooligomer. Can heterooligomerize with MCOLN2 or MCOLN3; heteromeric assemblies have different channel properties as compared to the respective homooligomers and may be tissue-specific. Interacts with PDCD6. Interacts with TMEM163. Interacts with LAPTM4B. In terms of processing, palmitoylated; involved in association with membranes. Phosphorylation by PKA inhibits channel activity. Dephosphorylation increases activity. Post-translationally, proteolytically cleaved probably involving multiple lysosomal proteases including cathepsin B; inhibits lysosomal channel activity. Widely expressed, with the highest expression in brain, liver and kidney.

The protein resides in the late endosome membrane. The protein localises to the lysosome membrane. Its subcellular location is the cytoplasmic vesicle membrane. It localises to the cell projection. It is found in the phagocytic cup. The protein resides in the cytoplasmic vesicle. The protein localises to the phagosome membrane. Its subcellular location is the cell membrane. The catalysed reaction is Ca(2+)(in) = Ca(2+)(out). The enzyme catalyses Fe(2+)(in) = Fe(2+)(out). It catalyses the reaction Mg(2+)(in) = Mg(2+)(out). It carries out the reaction K(+)(in) = K(+)(out). The catalysed reaction is Na(+)(in) = Na(+)(out). Its activity is regulated as follows. Channel activity is controlled by multiple regulatory mechanisms in different subcellular compartments. Lower pH by itself has an inhibitory effect on channel conductance. Channel function is transiently modulated by changes in Ca(2+) in a pH-dependent manner; pH changes modify the aggregation state of unitary channels; a negative cooperativity between extracellular/lumenal Ca(2+) and H(+) is suggested. Fe(2+) channel activity is potentiated by low pH. Regulated by phosphoinositides in a compartment-specific manner: in lysosomes activated by PtdIns(3,5)P2 (Phosphatidylinositol 3,5-bisphosphate) and at the plasma membrane inhibited by PtdIns(4,5)P2 (Phosphatidylinositol 4,5-bisphosphate). Its function is as follows. Nonselective cation channel probably playing a role in the regulation of membrane trafficking events and of metal homeostasis. Acts as a Ca(2+)-permeable cation channel with inwardly rectifying activity. Proposed to play a major role in Ca(2+) release from late endosome and lysosome vesicles to the cytoplasm, which is important for many lysosome-dependent cellular events, including the fusion and trafficking of these organelles, exocytosis and autophagy. Required for efficient uptake of large particles in macrophages in which Ca(2+) release from the lysosomes triggers lysosomal exocytosis. May also play a role in phagosome-lysosome fusion. Involved in lactosylceramide trafficking indicative for a role in the regulation of late endocytic membrane fusion/fission events. By mediating lysosomal Ca(2+) release is involved in regulation of mTORC1 signaling and in mTOR/TFEB-dependent lysosomal adaptation to environmental cues such as nutrient levels. Seems to act as lysosomal active oxygen species (ROS) sensor involved in ROS-induced TFEB activation and autophagy. Also functions as a Fe(2+) permeable channel in late endosomes and lysosomes. Also permeable to Mg(2+), Na(+). K(+) and Cs(+). Proposed to play a role in zinc homeostasis probably implicating its association with TMEM163. In adaptive immunity, TRPML2 and TRPML1 may play redundant roles in the function of the specialized lysosomes of B cells. May contribute to cellular lipase activity within the late endosomal pathway or at the cell surface which may be involved in processes of membrane reshaping and vesiculation, especially the growth of tubular structures. However, it is not known, whether it conveys the enzymatic activity directly, or merely facilitates the activity of an associated phospholipase. In Mus musculus (Mouse), this protein is Mucolipin-1.